A 119-amino-acid polypeptide reads, in one-letter code: Large ribosomal subunit protein bL17 (119 aa).

Belongs to the bacterial ribosomal protein bL17 family. In terms of assembly, part of the 50S ribosomal subunit. Contacts protein L32.

In Psychrobacter sp. (strain PRwf-1), this protein is Large ribosomal subunit protein bL17.